Reading from the N-terminus, the 467-residue chain is UDP-N-acetylmuramate--L-alanine ligase (467 aa).

114-120 (GTHGKTT) contributes to the ATP binding site.

This sequence belongs to the MurCDEF family.

The protein localises to the cytoplasm. It catalyses the reaction UDP-N-acetyl-alpha-D-muramate + L-alanine + ATP = UDP-N-acetyl-alpha-D-muramoyl-L-alanine + ADP + phosphate + H(+). Its pathway is cell wall biogenesis; peptidoglycan biosynthesis. Its function is as follows. Cell wall formation. In Chlorobium chlorochromatii (strain CaD3), this protein is UDP-N-acetylmuramate--L-alanine ligase.